The sequence spans 295 residues: Phosphatidylglycerol--prolipoprotein diacylglyceryl transferase (295 aa).

4 helical membrane passes run Trp-28–Thr-48, Leu-69–Tyr-89, Ile-101–Ala-121, and Ile-131–Gly-151. A 1,2-diacyl-sn-glycero-3-phospho-(1'-sn-glycerol) is bound at residue Arg-152. 3 helical membrane-spanning segments follow: residues Gln-195 to Trp-215, Gly-224 to Phe-244, and Gly-268 to Leu-288.

This sequence belongs to the Lgt family.

The protein resides in the cell inner membrane. It catalyses the reaction L-cysteinyl-[prolipoprotein] + a 1,2-diacyl-sn-glycero-3-phospho-(1'-sn-glycerol) = an S-1,2-diacyl-sn-glyceryl-L-cysteinyl-[prolipoprotein] + sn-glycerol 1-phosphate + H(+). It participates in protein modification; lipoprotein biosynthesis (diacylglyceryl transfer). Catalyzes the transfer of the diacylglyceryl group from phosphatidylglycerol to the sulfhydryl group of the N-terminal cysteine of a prolipoprotein, the first step in the formation of mature lipoproteins. In Ruegeria pomeroyi (strain ATCC 700808 / DSM 15171 / DSS-3) (Silicibacter pomeroyi), this protein is Phosphatidylglycerol--prolipoprotein diacylglyceryl transferase.